An 842-amino-acid chain; its full sequence is MSENNNDKTTGKKTLTLKRSVLETSTVKQNFSHGRTKAVVVETKRRKITRPDEKAEPLQPITKPHVAPQRSKPRFEEKKPQEAMAKSNLSSAEMEARLRALEEAHIQEKITREQAEKEARLAKEREEILKQEIQEQEILQKQEEEKPTVPISSVSSDPSLIEKTDIPIVPKNTTVIEKRKIDENQEEERHSRRANPAKSEIRAPKIVKGADERRRGKLTLNSALDEEGSARGRSMAAMRRRQEKFKRAQNQEPREKISREVVLPETITIQELAQRMTERSVDVIKFLMKQGQMMKPGDVIDADVAELIAVEFGHTVKRVLESDVEEGIFNITDNPQNMQPRPPVVTIMGHVDHGKTSLLDAIRKANVVSGEAGGITQHIGAYQVEQNGQKITFIDTPGHAAFTAMRARGARVTDIAVLVVAADDSVMPQTIESINHAKAAGVPIIVAINKIDKPAANAQKVRTELLQHEVFVETMGGETLDVEVSAKTGQNLDKLLEAILLQAEMLDLKADPQRTAEGVVIEAKLDRGRGSVATVLVQKGTLHPSDIIVAGNEWGRVRALIDDHGRHVKEAVPSTPIEILGMQGTPQAGDRFAVVTHEAKAREISEYRQRLARDKAVARQTGSRGSLEQMMTKLQTTGVKEFSLIIKGDVQGSIEAIASALEKLGNDEVRARVVHSGAGGITESDISLAEASNSAVIGFNVRANKQARDFAKTQGIEIRYYNIIYDLVDDIKAAMSGLLSPEQRETFLGNAEILEVFNITKIGKVAGCRVTEGKIERGAGVRLIRDNIVIHEGKLKTLKRFKDEVNEVQSGQECGIAFENYEDMRAGDIIETFRIEHINRTL.

Disordered stretches follow at residues 42–91 (ETKR…NLSS) and 139–253 (LQKQ…NQEP). 2 stretches are compositionally biased toward basic and acidic residues: residues 176-190 (IEKR…EERH) and 199-214 (SEIR…DERR). The region spanning 340-509 (PRPPVVTIMG…LLQAEMLDLK (170 aa)) is the tr-type G domain. Positions 349-356 (GHVDHGKT) are G1. 349–356 (GHVDHGKT) is a binding site for GTP. A G2 region spans residues 374 to 378 (GITQH). The segment at 395 to 398 (DTPG) is G3. Residues 395–399 (DTPGH) and 449–452 (NKID) contribute to the GTP site. The tract at residues 449 to 452 (NKID) is G4. A G5 region spans residues 485 to 487 (SAK).

The protein belongs to the TRAFAC class translation factor GTPase superfamily. Classic translation factor GTPase family. IF-2 subfamily.

The protein resides in the cytoplasm. In terms of biological role, one of the essential components for the initiation of protein synthesis. Protects formylmethionyl-tRNA from spontaneous hydrolysis and promotes its binding to the 30S ribosomal subunits. Also involved in the hydrolysis of GTP during the formation of the 70S ribosomal complex. The sequence is that of Translation initiation factor IF-2 from Bartonella tribocorum (strain CIP 105476 / IBS 506).